A 617-amino-acid chain; its full sequence is Probable Xaa-Pro aminopeptidase P (617 aa).

Mn(2+) is bound by residues D414, D425, E523, and E537.

The protein belongs to the peptidase M24B family. Mn(2+) is required as a cofactor.

The enzyme catalyses Release of any N-terminal amino acid, including proline, that is linked to proline, even from a dipeptide or tripeptide.. Its function is as follows. Catalyzes the removal of a penultimate prolyl residue from the N-termini of peptides. This Colletotrichum graminicola (strain M1.001 / M2 / FGSC 10212) (Maize anthracnose fungus) protein is Probable Xaa-Pro aminopeptidase P (AMPP).